The primary structure comprises 326 residues: Tagatose 1,6-diphosphate aldolase (326 aa).

Belongs to the aldolase LacD family.

It catalyses the reaction D-tagatofuranose 1,6-bisphosphate = D-glyceraldehyde 3-phosphate + dihydroxyacetone phosphate. It participates in carbohydrate metabolism; D-tagatose 6-phosphate degradation; D-glyceraldehyde 3-phosphate and glycerone phosphate from D-tagatose 6-phosphate: step 2/2. The chain is Tagatose 1,6-diphosphate aldolase from Streptococcus pneumoniae (strain ATCC BAA-255 / R6).